We begin with the raw amino-acid sequence, 451 residues long: MQRHAIILAAGKGTRMKSKKYKVLHEVAGKPMVEHVLNNVKQAGVDQIVTIIGHGAESVKDTLGNQSLYSFQDKQLGTAHAVKMAHEHLADKEGTTLVVCGDTPLITYQTLQSLIEHHESTQSHVTVLSASTINPYGYGRIIRNHNGILERIVEEKDANDSERAIKEISSGIFAFNNRVLFEKLEQVKNDNAQGEYYLPDVLSLILKDGGKAEVYCTEDFDEIIGVNDRLMLSEAEKALQQRINRYHMENGVTIIDPSSTFIGTDVKIGIDTTIEPGVRIGGHTTIEEDVWIGQYSEINNSTIHSNANIKQSVINDSIVGENTTVGPFAQLRPGSNLGSEVKVGNFVEVKKADIKDGAKVSHLSYIGDAEIGERTNIGCGSITVNYDGANKFKTIVGKDAFIGCNTNLIAPVTVGNHTLIAAGSTITDNIPEDSLALARARQVNKEGYLKK.

Positions Met-1 to Arg-229 are pyrophosphorylase. Residues Leu-8 to Gly-11, Lys-22, Gln-72, and Gly-77 to Thr-78 contribute to the UDP-N-acetyl-alpha-D-glucosamine site. Asp-102 lines the Mg(2+) pocket. UDP-N-acetyl-alpha-D-glucosamine contacts are provided by Gly-139, Glu-154, and Asn-227. Asn-227 serves as a coordination point for Mg(2+). The tract at residues Leu-230–Asn-250 is linker. An N-acetyltransferase region spans residues Gly-251 to Lys-451. 2 residues coordinate UDP-N-acetyl-alpha-D-glucosamine: Arg-332 and Lys-350. The active-site Proton acceptor is His-362. The UDP-N-acetyl-alpha-D-glucosamine site is built by Tyr-365 and Asn-376. Residues Asn-385–Tyr-386, Ala-422, and Arg-439 each bind acetyl-CoA.

This sequence in the N-terminal section; belongs to the N-acetylglucosamine-1-phosphate uridyltransferase family. The protein in the C-terminal section; belongs to the transferase hexapeptide repeat family. Homotrimer. The cofactor is Mg(2+).

The protein resides in the cytoplasm. The enzyme catalyses alpha-D-glucosamine 1-phosphate + acetyl-CoA = N-acetyl-alpha-D-glucosamine 1-phosphate + CoA + H(+). It catalyses the reaction N-acetyl-alpha-D-glucosamine 1-phosphate + UTP + H(+) = UDP-N-acetyl-alpha-D-glucosamine + diphosphate. It participates in nucleotide-sugar biosynthesis; UDP-N-acetyl-alpha-D-glucosamine biosynthesis; N-acetyl-alpha-D-glucosamine 1-phosphate from alpha-D-glucosamine 6-phosphate (route II): step 2/2. Its pathway is nucleotide-sugar biosynthesis; UDP-N-acetyl-alpha-D-glucosamine biosynthesis; UDP-N-acetyl-alpha-D-glucosamine from N-acetyl-alpha-D-glucosamine 1-phosphate: step 1/1. The protein operates within bacterial outer membrane biogenesis; LPS lipid A biosynthesis. Its function is as follows. Catalyzes the last two sequential reactions in the de novo biosynthetic pathway for UDP-N-acetylglucosamine (UDP-GlcNAc). The C-terminal domain catalyzes the transfer of acetyl group from acetyl coenzyme A to glucosamine-1-phosphate (GlcN-1-P) to produce N-acetylglucosamine-1-phosphate (GlcNAc-1-P), which is converted into UDP-GlcNAc by the transfer of uridine 5-monophosphate (from uridine 5-triphosphate), a reaction catalyzed by the N-terminal domain. The chain is Bifunctional protein GlmU from Staphylococcus epidermidis (strain ATCC 35984 / DSM 28319 / BCRC 17069 / CCUG 31568 / BM 3577 / RP62A).